A 369-amino-acid polypeptide reads, in one-letter code: Biglycan (369 aa).

The signal sequence occupies residues 1–16 (MCPLWLLAALLALSQA). A propeptide spanning residues 17 to 37 (LPFEQKAFWDFTLDDGLPMLN) is cleaved from the precursor. O-linked (Xyl...) (glycosaminoglycan) serine glycans are attached at residues Ser42 and Ser48. 2 cysteine pairs are disulfide-bonded: Cys64/Cys70 and Cys68/Cys77. LRR repeat units lie at residues 83–103 (KAVP…NNDI), 104–127 (SELR…NNKI), 128–151 (SKIH…KNHL), 152–172 (VEIP…DNRI), 173–196 (RKVP…GNPL), 197–221 (ENSG…EAKL), 222–242 (TGIP…HNKI), 243–266 (QAIE…HNQI), 267–290 (RMIE…NNKL), 291–313 (SRVP…TNNI), 314–343 (TKVG…NNPV), and 344–369 (PYWE…NYKK). Asn271 and Asn312 each carry an N-linked (GlcNAc...) asparagine glycan. Residues Cys322 and Cys355 are joined by a disulfide bond.

The protein belongs to the small leucine-rich proteoglycan (SLRP) family. SLRP class I subfamily. Homodimer. Forms a ternary complex with MFAP2 and ELN. Post-translationally, the two attached glycosaminoglycan chains can be either chondroitin sulfate or dermatan sulfate. Found in several connective tissues, especially in articular cartilages.

The protein resides in the secreted. It is found in the extracellular space. It localises to the extracellular matrix. May be involved in collagen fiber assembly. In Ovis aries (Sheep), this protein is Biglycan (BGN).